Here is a 223-residue protein sequence, read N- to C-terminus: Sugar fermentation stimulation protein homolog (223 aa).

This sequence belongs to the SfsA family.

This is Sugar fermentation stimulation protein homolog from Thermosipho melanesiensis (strain DSM 12029 / CIP 104789 / BI429).